The sequence spans 59 residues: UPF0434 protein Sputw3181_2540 (59 aa).

Belongs to the UPF0434 family.

The chain is UPF0434 protein Sputw3181_2540 from Shewanella sp. (strain W3-18-1).